The following is a 116-amino-acid chain: Large ribosomal subunit protein uL22 (116 aa).

Belongs to the universal ribosomal protein uL22 family. As to quaternary structure, part of the 50S ribosomal subunit.

Functionally, this protein binds specifically to 23S rRNA; its binding is stimulated by other ribosomal proteins, e.g. L4, L17, and L20. It is important during the early stages of 50S assembly. It makes multiple contacts with different domains of the 23S rRNA in the assembled 50S subunit and ribosome. In terms of biological role, the globular domain of the protein is located near the polypeptide exit tunnel on the outside of the subunit, while an extended beta-hairpin is found that lines the wall of the exit tunnel in the center of the 70S ribosome. The chain is Large ribosomal subunit protein uL22 from Sulfurihydrogenibium sp. (strain YO3AOP1).